Here is a 178-residue protein sequence, read N- to C-terminus: MARAAPGSGASPLPLLPALALGLVILHCVVADGNSTRSPEDDGLLCGDHAENCPATTTQPKRRGHFSRCPKQYKHYCIKGRCRFVVAEQTPSCVCDEGYAGARCERVDLFYLRGDRGQILVICLIAVMVIFIILVVSICTCCHPLRKRRKRRKKEEEMETLGKDITPINDDIQETSIA.

An N-terminal signal peptide occupies residues 1 to 31 (MARAAPGSGASPLPLLPALALGLVILHCVVA). Over 32–118 (DGNSTRSPED…LFYLRGDRGQ (87 aa)) the chain is Extracellular. Residue asparagine 34 is glycosylated (N-linked (GlcNAc...) asparagine). The 41-residue stretch at 65–105 (HFSRCPKQYKHYCIKGRCRFVVAEQTPSCVCDEGYAGARCE) folds into the EGF-like domain. Cystine bridges form between cysteine 69–cysteine 82, cysteine 77–cysteine 93, and cysteine 95–cysteine 104. Residues 112-178 (LRGDRGQILV…NDDIQETSIA (67 aa)) constitute a propeptide, removed in mature form. Residues 119–139 (ILVICLIAVMVIFIILVVSIC) form a helical membrane-spanning segment. Residues 140-178 (TCCHPLRKRRKRRKKEEEMETLGKDITPINDDIQETSIA) are Cytoplasmic-facing.

Monomer. Interacts with EGFR and ERBB4. As to expression, expressed in a wide range of tissues, including the mammary gland.

The protein resides in the secreted. It localises to the extracellular space. Its subcellular location is the cell membrane. In terms of biological role, growth factor that binds to EGFR, ERBB4 and other EGF receptor family members. Potent mitogen for retinal pigment epithelial cells and vascular smooth muscle cells. This is Probetacellulin (BTC) from Bos taurus (Bovine).